The chain runs to 189 residues: Large ribosomal subunit protein bL9 (189 aa).

Belongs to the bacterial ribosomal protein bL9 family.

Functionally, binds to the 23S rRNA. The sequence is that of Large ribosomal subunit protein bL9 from Cereibacter sphaeroides (strain KD131 / KCTC 12085) (Rhodobacter sphaeroides).